A 128-amino-acid polypeptide reads, in one-letter code: 3-aminoacrylate deaminase RutC (128 aa).

The protein belongs to the RutC family.

It catalyses the reaction (Z)-3-aminoacrylate + H2O + H(+) = 3-oxopropanoate + NH4(+). Its function is as follows. Involved in pyrimidine catabolism. Catalyzes the deamination of 3-aminoacrylate to malonic semialdehyde, a reaction that can also occur spontaneously. RutC may facilitate the reaction and modulate the metabolic fitness, rather than catalyzing essential functions. The protein is 3-aminoacrylate deaminase RutC of Enterobacter cloacae subsp. cloacae (strain ATCC 13047 / DSM 30054 / NBRC 13535 / NCTC 10005 / WDCM 00083 / NCDC 279-56).